A 94-amino-acid polypeptide reads, in one-letter code: Large ribosomal subunit protein uL23 (94 aa).

The protein belongs to the universal ribosomal protein uL23 family. As to quaternary structure, part of the 50S ribosomal subunit. Contacts protein L29, and trigger factor when it is bound to the ribosome.

Functionally, one of the early assembly proteins it binds 23S rRNA. One of the proteins that surrounds the polypeptide exit tunnel on the outside of the ribosome. Forms the main docking site for trigger factor binding to the ribosome. The polypeptide is Large ribosomal subunit protein uL23 (Listeria innocua serovar 6a (strain ATCC BAA-680 / CLIP 11262)).